The following is a 340-amino-acid chain: Ketol-acid reductoisomerase (NADP(+)) (340 aa).

The region spanning Ala2 to Thr181 is the KARI N-terminal Rossmann domain. Residues Tyr25–Gln28, Arg48, Ser52, and Asp82–Gln85 each bind NADP(+). The active site involves His107. Gly133 is a binding site for NADP(+). One can recognise a KARI C-terminal knotted domain in the interval Thr182–Val327. Residues Asp190, Glu194, Glu226, and Glu230 each coordinate Mg(2+). Ser251 contributes to the substrate binding site.

The protein belongs to the ketol-acid reductoisomerase family. Mg(2+) is required as a cofactor.

It carries out the reaction (2R)-2,3-dihydroxy-3-methylbutanoate + NADP(+) = (2S)-2-acetolactate + NADPH + H(+). The catalysed reaction is (2R,3R)-2,3-dihydroxy-3-methylpentanoate + NADP(+) = (S)-2-ethyl-2-hydroxy-3-oxobutanoate + NADPH + H(+). It functions in the pathway amino-acid biosynthesis; L-isoleucine biosynthesis; L-isoleucine from 2-oxobutanoate: step 2/4. Its pathway is amino-acid biosynthesis; L-valine biosynthesis; L-valine from pyruvate: step 2/4. Involved in the biosynthesis of branched-chain amino acids (BCAA). Catalyzes an alkyl-migration followed by a ketol-acid reduction of (S)-2-acetolactate (S2AL) to yield (R)-2,3-dihydroxy-isovalerate. In the isomerase reaction, S2AL is rearranged via a Mg-dependent methyl migration to produce 3-hydroxy-3-methyl-2-ketobutyrate (HMKB). In the reductase reaction, this 2-ketoacid undergoes a metal-dependent reduction by NADPH to yield (R)-2,3-dihydroxy-isovalerate. The protein is Ketol-acid reductoisomerase (NADP(+)) of Halalkalibacterium halodurans (strain ATCC BAA-125 / DSM 18197 / FERM 7344 / JCM 9153 / C-125) (Bacillus halodurans).